A 198-amino-acid polypeptide reads, in one-letter code: Recombination protein RecR (198 aa).

The C4-type zinc-finger motif lies at 57 to 72; that stretch reads CSECQTLTDKDPCAVC. Residues 80-175 form the Toprim domain; it reads RIICVVEGVP…KVTRIAQGIP (96 aa).

This sequence belongs to the RecR family.

Functionally, may play a role in DNA repair. It seems to be involved in an RecBC-independent recombinational process of DNA repair. It may act with RecF and RecO. This is Recombination protein RecR from Anaeromyxobacter sp. (strain Fw109-5).